We begin with the raw amino-acid sequence, 941 residues long: Endoplasmic reticulum aminopeptidase 1 (941 aa).

Position 1 (M1) is a topological domain, cytoplasmic. A helical; Signal-anchor for type II membrane protein transmembrane segment spans residues 2 to 21 (VFLPLKWSLATMSFLLSSLL). The Lumenal portion of the chain corresponds to 22 to 941 (ALLTVSTPSW…WLQSEKLERM (920 aa)). Residues N70 and N154 are each glycosylated (N-linked (GlcNAc...) asparagine). Substrate-binding positions include E183 and 317 to 321 (GAMEN). H353 provides a ligand contact to Zn(2+). E354 (proton acceptor) is an active-site residue. 2 residues coordinate Zn(2+): H357 and E376. Intrachain disulfides connect C404-C443 and C736-C743. N414 carries N-linked (GlcNAc...) asparagine glycosylation. Residues N760 and N901 are each glycosylated (N-linked (GlcNAc...) asparagine).

This sequence belongs to the peptidase M1 family. In terms of assembly, monomer. May also exist as a heterodimer; with ERAP2. Interacts with RBMX. The cofactor is Zn(2+). Post-translationally, N-glycosylated. Ubiquitous.

It localises to the endoplasmic reticulum membrane. Aminopeptidase that plays a central role in peptide trimming, a step required for the generation of most HLA class I-binding peptides. Peptide trimming is essential to customize longer precursor peptides to fit them to the correct length required for presentation on MHC class I molecules. Strongly prefers substrates 9-16 residues long. Rapidly degrades 13-mer to a 9-mer and then stops. Preferentially hydrolyzes the residue Leu and peptides with a hydrophobic C-terminus, while it has weak activity toward peptides with charged C-terminus. May play a role in the inactivation of peptide hormones. May be involved in the regulation of blood pressure through the inactivation of angiotensin II and/or the generation of bradykinin in the kidney. The polypeptide is Endoplasmic reticulum aminopeptidase 1 (ERAP1) (Homo sapiens (Human)).